The sequence spans 207 residues: Large ribosomal subunit protein uL4 (207 aa).

The tract at residues 50–76 (AVKNRSAVSGGGRKPWKQKGTGRARQG) is disordered.

The protein belongs to the universal ribosomal protein uL4 family. Part of the 50S ribosomal subunit.

Its function is as follows. One of the primary rRNA binding proteins, this protein initially binds near the 5'-end of the 23S rRNA. It is important during the early stages of 50S assembly. It makes multiple contacts with different domains of the 23S rRNA in the assembled 50S subunit and ribosome. Functionally, forms part of the polypeptide exit tunnel. The chain is Large ribosomal subunit protein uL4 from Staphylococcus aureus (strain JH9).